Here is a 375-residue protein sequence, read N- to C-terminus: Riboflavin biosynthesis protein RibD (375 aa).

A deaminase region spans residues 1–150 (MEVLSEQQLF…QPYLYQRERG (150 aa)). Residues 6-127 (EQQLFFMRKA…ARLQAAGIPV (122 aa)) form the CMP/dCMP-type deaminase domain. A Zn(2+)-binding site is contributed by H55. Catalysis depends on E57, which acts as the Proton donor. Residues C80 and C89 each coordinate Zn(2+). Residues 151–375 (LPWVVMKTAA…LEQESVDKKG (225 aa)) form a reductase region. A159 serves as a coordination point for NADP(+). S173 contributes to the substrate binding site. Residue W175 coordinates NADP(+). R189 is a substrate binding site. 2 residues coordinate NADP(+): T201 and D205. Residues L209 and R212 each coordinate substrate. NADP(+) is bound at residue S230. Residue E299 coordinates substrate. 301 to 307 (GAQLHSA) provides a ligand contact to NADP(+).

This sequence in the N-terminal section; belongs to the cytidine and deoxycytidylate deaminase family. In the C-terminal section; belongs to the HTP reductase family. The cofactor is Zn(2+).

It catalyses the reaction 2,5-diamino-6-hydroxy-4-(5-phosphoribosylamino)-pyrimidine + H2O + H(+) = 5-amino-6-(5-phospho-D-ribosylamino)uracil + NH4(+). It carries out the reaction 5-amino-6-(5-phospho-D-ribitylamino)uracil + NADP(+) = 5-amino-6-(5-phospho-D-ribosylamino)uracil + NADPH + H(+). Its pathway is cofactor biosynthesis; riboflavin biosynthesis; 5-amino-6-(D-ribitylamino)uracil from GTP: step 2/4. It participates in cofactor biosynthesis; riboflavin biosynthesis; 5-amino-6-(D-ribitylamino)uracil from GTP: step 3/4. Its function is as follows. Converts 2,5-diamino-6-(ribosylamino)-4(3h)-pyrimidinone 5'-phosphate into 5-amino-6-(ribosylamino)-2,4(1h,3h)-pyrimidinedione 5'-phosphate. This chain is Riboflavin biosynthesis protein RibD (ribD), found in Chlamydia trachomatis serovar D (strain ATCC VR-885 / DSM 19411 / UW-3/Cx).